Reading from the N-terminus, the 33-residue chain is Protein YdgV (33 aa).

In Escherichia coli (strain K12), this protein is Protein YdgV.